The following is a 264-amino-acid chain: S-adenosylmethionine decarboxylase proenzyme (264 aa).

The active-site Schiff-base intermediate with substrate; via pyruvic acid is Ser113. At Ser113 the chain carries Pyruvic acid (Ser); by autocatalysis. The Proton acceptor; for processing activity role is filled by His118. Cys141 serves as the catalytic Proton donor; for catalytic activity.

This sequence belongs to the prokaryotic AdoMetDC family. Type 2 subfamily. In terms of assembly, heterooctamer of four alpha and four beta chains arranged as a tetramer of alpha/beta heterodimers. Pyruvate serves as cofactor. Post-translationally, is synthesized initially as an inactive proenzyme. Formation of the active enzyme involves a self-maturation process in which the active site pyruvoyl group is generated from an internal serine residue via an autocatalytic post-translational modification. Two non-identical subunits are generated from the proenzyme in this reaction, and the pyruvate is formed at the N-terminus of the alpha chain, which is derived from the carboxyl end of the proenzyme. The post-translation cleavage follows an unusual pathway, termed non-hydrolytic serinolysis, in which the side chain hydroxyl group of the serine supplies its oxygen atom to form the C-terminus of the beta chain, while the remainder of the serine residue undergoes an oxidative deamination to produce ammonia and the pyruvoyl group blocking the N-terminus of the alpha chain.

The enzyme catalyses S-adenosyl-L-methionine + H(+) = S-adenosyl 3-(methylsulfanyl)propylamine + CO2. It functions in the pathway amine and polyamine biosynthesis; S-adenosylmethioninamine biosynthesis; S-adenosylmethioninamine from S-adenosyl-L-methionine: step 1/1. Its function is as follows. Catalyzes the decarboxylation of S-adenosylmethionine to S-adenosylmethioninamine (dcAdoMet), the propylamine donor required for the synthesis of the polyamines spermine and spermidine from the diamine putrescine. This is S-adenosylmethionine decarboxylase proenzyme from Xanthomonas campestris pv. campestris (strain B100).